A 343-amino-acid chain; its full sequence is D-beta-hydroxybutyrate dehydrogenase, mitochondrial (343 aa).

The transit peptide at 1 to 46 (MLAARLSRPLSQLPGKALSVRDRENGTRHTLLFYPASFSPDTRRTY) directs the protein to the mitochondrion. 60–84 (ITGCDSGFGFSLAKHLHSKGFLVFA) contributes to the NAD(+) binding site. N6-acetyllysine occurs at positions 73 and 97. Lys103 is modified (N6-acetyllysine; alternate). At Lys103 the chain carries N6-succinyllysine; alternate. Residues Lys132 and Lys177 each carry the N6-acetyllysine modification. A substrate-binding site is contributed by Met196. The active-site Proton acceptor is Cys209. Lys212 is subject to N6-acetyllysine. Ser219 is a glycosylation site (O-linked (GlcNAc) serine). Phosphoserine is present on Ser246. Lys258 is modified (N6-acetyllysine). Position 259 is an N6-acetyllysine; alternate (Lys259). Lys259 is subject to N6-succinyllysine; alternate. Lys280 is modified (N6-acetyllysine).

Belongs to the short-chain dehydrogenases/reductases (SDR) family. In terms of assembly, homotetramer. In terms of processing, acetylation of Lys-132 is observed in liver mitochondria from fasted mice but not from fed mice.

Its subcellular location is the mitochondrion inner membrane. It is found in the mitochondrion matrix. The enzyme catalyses (R)-3-hydroxybutanoate + NAD(+) = acetoacetate + NADH + H(+). Requires phosphatidylcholine as an allosteric activator for enzymatic activity. This chain is D-beta-hydroxybutyrate dehydrogenase, mitochondrial, found in Mus musculus (Mouse).